The primary structure comprises 655 residues: Putative phagocytic receptor 1c (655 aa).

Residues 1–20 (MLNIIVVLLLLFFSNNVIDS) form the signal peptide. Residues 146-173 (SNSKSSEITSPPSSPSSSSSSSSSPSSS) are compositionally biased toward low complexity. The tract at residues 146-185 (SNSKSSEITSPPSSPSSSSSSSSSPSSSIEEEDDDDTEND) is disordered. Acidic residues predominate over residues 174–183 (IEEEDDDDTE). The next 9 helical transmembrane spans lie at 300-320 (IDIIMSFIIVLAVSACLAIIL), 359-379 (FSIIIGFGVQIVASLFILMVF), 387-407 (IATPGGMAIASILIFSFTGIF), 428-448 (SVITTTLIPFTILLLMFIGYF), 461-481 (IGTVFFILAMWLLVCVPCSLL), 518-538 (MILGGIIPFVIIFTDLSFFLS), 550-570 (LSFALTFILMIISIVETNMII), 587-607 (LLGPMVTGLYTFIYFIYFGIT), and 619-639 (FMFSLVFSILVSLFCSSIGFL).

The protein belongs to the nonaspanin (TM9SF) (TC 9.A.2) family.

Its subcellular location is the membrane. The chain is Putative phagocytic receptor 1c (phg1c) from Dictyostelium discoideum (Social amoeba).